Consider the following 633-residue polypeptide: 1-deoxy-D-xylulose-5-phosphate synthase (633 aa).

Thiamine diphosphate contacts are provided by residues His-72 and 113–115 (GHS). Residue Asp-144 participates in Mg(2+) binding. Thiamine diphosphate-binding positions include 145 to 146 (GA), Asn-173, Tyr-284, and Glu-367. Asn-173 serves as a coordination point for Mg(2+).

Belongs to the transketolase family. DXPS subfamily. As to quaternary structure, homodimer. It depends on Mg(2+) as a cofactor. Requires thiamine diphosphate as cofactor.

It carries out the reaction D-glyceraldehyde 3-phosphate + pyruvate + H(+) = 1-deoxy-D-xylulose 5-phosphate + CO2. It participates in metabolic intermediate biosynthesis; 1-deoxy-D-xylulose 5-phosphate biosynthesis; 1-deoxy-D-xylulose 5-phosphate from D-glyceraldehyde 3-phosphate and pyruvate: step 1/1. Functionally, catalyzes the acyloin condensation reaction between C atoms 2 and 3 of pyruvate and glyceraldehyde 3-phosphate to yield 1-deoxy-D-xylulose-5-phosphate (DXP). This is 1-deoxy-D-xylulose-5-phosphate synthase from Lysinibacillus sphaericus (strain C3-41).